Here is a 396-residue protein sequence, read N- to C-terminus: S-adenosylmethionine synthase (396 aa).

Residue H15 coordinates ATP. Mg(2+) is bound at residue D17. E43 provides a ligand contact to K(+). L-methionine contacts are provided by E56 and Q99. Residues 99–109 are flexible loop; the sequence is QSSDIAMGVDK. ATP-binding positions include 175-177, 241-242, D250, 256-257, A273, and K277; these read DGK, RF, and RK. Position 250 (D250) interacts with L-methionine. K281 contributes to the L-methionine binding site.

It belongs to the AdoMet synthase family. In terms of assembly, homotetramer; dimer of dimers. It depends on Mg(2+) as a cofactor. The cofactor is K(+).

It is found in the cytoplasm. It catalyses the reaction L-methionine + ATP + H2O = S-adenosyl-L-methionine + phosphate + diphosphate. It participates in amino-acid biosynthesis; S-adenosyl-L-methionine biosynthesis; S-adenosyl-L-methionine from L-methionine: step 1/1. Catalyzes the formation of S-adenosylmethionine (AdoMet) from methionine and ATP. The overall synthetic reaction is composed of two sequential steps, AdoMet formation and the subsequent tripolyphosphate hydrolysis which occurs prior to release of AdoMet from the enzyme. This chain is S-adenosylmethionine synthase, found in Ruminiclostridium cellulolyticum (strain ATCC 35319 / DSM 5812 / JCM 6584 / H10) (Clostridium cellulolyticum).